A 627-amino-acid polypeptide reads, in one-letter code: 1-deoxy-D-xylulose-5-phosphate synthase (627 aa).

Residues histidine 87 and 128–130 contribute to the thiamine diphosphate site; that span reads GHS. Mg(2+) is bound at residue aspartate 159. Thiamine diphosphate contacts are provided by residues 160–161, asparagine 188, phenylalanine 295, and glutamate 375; that span reads GA. Position 188 (asparagine 188) interacts with Mg(2+).

Belongs to the transketolase family. DXPS subfamily. In terms of assembly, homodimer. It depends on Mg(2+) as a cofactor. The cofactor is thiamine diphosphate.

It catalyses the reaction D-glyceraldehyde 3-phosphate + pyruvate + H(+) = 1-deoxy-D-xylulose 5-phosphate + CO2. Its pathway is metabolic intermediate biosynthesis; 1-deoxy-D-xylulose 5-phosphate biosynthesis; 1-deoxy-D-xylulose 5-phosphate from D-glyceraldehyde 3-phosphate and pyruvate: step 1/1. Functionally, catalyzes the acyloin condensation reaction between C atoms 2 and 3 of pyruvate and glyceraldehyde 3-phosphate to yield 1-deoxy-D-xylulose-5-phosphate (DXP). The protein is 1-deoxy-D-xylulose-5-phosphate synthase of Pseudomonas paraeruginosa (strain DSM 24068 / PA7) (Pseudomonas aeruginosa (strain PA7)).